We begin with the raw amino-acid sequence, 2280 residues long: Protein Ycf2 (2280 aa).

1634–1641 serves as a coordination point for ATP; it reads GSIGTGRS.

This sequence belongs to the Ycf2 family.

The protein localises to the plastid. It is found in the chloroplast stroma. Its function is as follows. Probable ATPase of unknown function. Its presence in a non-photosynthetic plant (Epifagus virginiana) and experiments in tobacco indicate that it has an essential function which is probably not related to photosynthesis. The polypeptide is Protein Ycf2 (Eucalyptus globulus subsp. globulus (Tasmanian blue gum)).